A 550-amino-acid polypeptide reads, in one-letter code: Leucine-rich repeat LGI family member 2 (550 aa).

The first 25 residues, 1 to 25 (MALWRGGGALGLLLLSAACLIPPSA), serve as a signal peptide directing secretion. The LRRNT domain maps to 26–62 (QVRRLARCPATCSCTKESIICVGSSWVPRIVPGDISS). Residue asparagine 67 is glycosylated (N-linked (GlcNAc...) asparagine). 2 LRR repeats span residues 83–104 (SLQL…AFAG) and 107–128 (HLEY…AFRG). The region spanning 140–190 (NKFECDCKAKWLYLWLKMTNSTVSDVLCIGPPEYQEKKLNEVTSFDYECTT) is the LRRCT domain. An N-linked (GlcNAc...) asparagine glycan is attached at asparagine 159. EAR repeat units follow at residues 224-266 (DFVV…EWDH), 270-312 (NFRS…KYDE), 316-363 (KFVK…KWNS), 365-408 (GFYS…QWNK), 412-455 (KFVP…RWNS), 457-499 (QFVE…QWDK), and 503-545 (QFKK…EHII). N-linked (GlcNAc...) asparagine glycosylation is present at asparagine 276. Residue asparagine 407 is glycosylated (N-linked (GlcNAc...) asparagine).

As to expression, brain.

It localises to the secreted. In terms of biological role, required for the development of soma-targeting inhibitory GABAergic synapses made by parvalbumin-positive basket cells. This Mus musculus (Mouse) protein is Leucine-rich repeat LGI family member 2 (Lgi2).